We begin with the raw amino-acid sequence, 400 residues long: PHD finger protein 24 (400 aa).

Gly2 carries the N-myristoyl glycine lipid modification. Residues 30–108 are disordered; the sequence is DRPSIRRTGE…FTPPAFIRPT (79 aa). The residue at position 36 (Arg36) is an Omega-N-methylarginine. Ser43 carries the phosphoserine modification. Thr47 carries the post-translational modification Phosphothreonine. At Ser51 the chain carries Phosphoserine. Residues 78-97 show a composition bias toward basic and acidic residues; it reads AWERLRDGRGVEPEEFDRTG. A PHD-type zinc finger spans residues 129–190; it reads NDEMCDVCEV…TGWSCHYCDN (62 aa).

The polypeptide is PHD finger protein 24 (Pongo abelii (Sumatran orangutan)).